Consider the following 1154-residue polypeptide: uncharacterized protein (1154 aa).

The first 18 residues, 1-18 (MKRNIFIKLLISLLLLSS), serve as a signal peptide directing secretion. Residue Cys19 is the site of N-palmitoyl cysteine attachment. Cys19 carries the S-diacylglycerol cysteine lipid modification. 4 consecutive transmembrane segments (helical) span residues 288–308 (ISVS…FLIG), 394–414 (LGFI…FLIF), 423–443 (ALIT…FMLF), and 458–478 (ISYA…SMII).

Belongs to the TrbL/VirB6 family.

It is found in the cell membrane. This is an uncharacterized protein from Rickettsia typhi (strain ATCC VR-144 / Wilmington).